Here is a 210-residue protein sequence, read N- to C-terminus: Outer-membrane lipoprotein carrier protein (210 aa).

Residues 1-22 (MRAFKWALAIGATLALPLTAQA) form the signal peptide.

It belongs to the LolA family. As to quaternary structure, monomer.

The protein resides in the periplasm. In terms of biological role, participates in the translocation of lipoproteins from the inner membrane to the outer membrane. Only forms a complex with a lipoprotein if the residue after the N-terminal Cys is not an aspartate (The Asp acts as a targeting signal to indicate that the lipoprotein should stay in the inner membrane). This chain is Outer-membrane lipoprotein carrier protein, found in Chromohalobacter salexigens (strain ATCC BAA-138 / DSM 3043 / CIP 106854 / NCIMB 13768 / 1H11).